Consider the following 283-residue polypeptide: Bifunctional protein FolD (283 aa).

NADP(+) is bound by residues 165 to 167 and Ser190; that span reads GAS.

It belongs to the tetrahydrofolate dehydrogenase/cyclohydrolase family. In terms of assembly, homodimer.

It carries out the reaction (6R)-5,10-methylene-5,6,7,8-tetrahydrofolate + NADP(+) = (6R)-5,10-methenyltetrahydrofolate + NADPH. The catalysed reaction is (6R)-5,10-methenyltetrahydrofolate + H2O = (6R)-10-formyltetrahydrofolate + H(+). It functions in the pathway one-carbon metabolism; tetrahydrofolate interconversion. Catalyzes the oxidation of 5,10-methylenetetrahydrofolate to 5,10-methenyltetrahydrofolate and then the hydrolysis of 5,10-methenyltetrahydrofolate to 10-formyltetrahydrofolate. This chain is Bifunctional protein FolD, found in Cupriavidus taiwanensis (strain DSM 17343 / BCRC 17206 / CCUG 44338 / CIP 107171 / LMG 19424 / R1) (Ralstonia taiwanensis (strain LMG 19424)).